A 417-amino-acid polypeptide reads, in one-letter code: NADH-quinone oxidoreductase subunit D (417 aa).

This sequence belongs to the complex I 49 kDa subunit family. In terms of assembly, NDH-1 is composed of 14 different subunits. Subunits NuoB, C, D, E, F, and G constitute the peripheral sector of the complex.

Its subcellular location is the cell inner membrane. The catalysed reaction is a quinone + NADH + 5 H(+)(in) = a quinol + NAD(+) + 4 H(+)(out). Its function is as follows. NDH-1 shuttles electrons from NADH, via FMN and iron-sulfur (Fe-S) centers, to quinones in the respiratory chain. The immediate electron acceptor for the enzyme in this species is believed to be ubiquinone. Couples the redox reaction to proton translocation (for every two electrons transferred, four hydrogen ions are translocated across the cytoplasmic membrane), and thus conserves the redox energy in a proton gradient. This is NADH-quinone oxidoreductase subunit D from Burkholderia ambifaria (strain ATCC BAA-244 / DSM 16087 / CCUG 44356 / LMG 19182 / AMMD) (Burkholderia cepacia (strain AMMD)).